We begin with the raw amino-acid sequence, 166 residues long: Transcription antitermination protein NusB (166 aa).

Basic and acidic residues predominate over residues 1–18 (MISDESDRFNPRDPKPAD). Residues 1–30 (MISDESDRFNPRDPKPADAGKPSKSAKRRE) are disordered.

Belongs to the NusB family.

Functionally, involved in transcription antitermination. Required for transcription of ribosomal RNA (rRNA) genes. Binds specifically to the boxA antiterminator sequence of the ribosomal RNA (rrn) operons. This chain is Transcription antitermination protein NusB, found in Pseudomonas fluorescens (strain Pf0-1).